Here is a 674-residue protein sequence, read N- to C-terminus: DNA ligase (674 aa).

Residues Asp-35–Asp-39, Ser-84–Leu-85, and Glu-118 contribute to the NAD(+) site. Lys-120 (N6-AMP-lysine intermediate) is an active-site residue. Arg-141, Glu-184, Lys-297, and Lys-321 together coordinate NAD(+). Positions 415, 418, 433, and 439 each coordinate Zn(2+). One can recognise a BRCT domain in the interval Leu-598–Leu-674.

It belongs to the NAD-dependent DNA ligase family. LigA subfamily. The cofactor is Mg(2+). It depends on Mn(2+) as a cofactor.

It catalyses the reaction NAD(+) + (deoxyribonucleotide)n-3'-hydroxyl + 5'-phospho-(deoxyribonucleotide)m = (deoxyribonucleotide)n+m + AMP + beta-nicotinamide D-nucleotide.. Functionally, DNA ligase that catalyzes the formation of phosphodiester linkages between 5'-phosphoryl and 3'-hydroxyl groups in double-stranded DNA using NAD as a coenzyme and as the energy source for the reaction. It is essential for DNA replication and repair of damaged DNA. In Chlorobium phaeovibrioides (strain DSM 265 / 1930) (Prosthecochloris vibrioformis (strain DSM 265)), this protein is DNA ligase.